The primary structure comprises 430 residues: Asparagine--tRNA ligase (430 aa).

Belongs to the class-II aminoacyl-tRNA synthetase family. Homodimer.

It is found in the cytoplasm. It catalyses the reaction tRNA(Asn) + L-asparagine + ATP = L-asparaginyl-tRNA(Asn) + AMP + diphosphate + H(+). The protein is Asparagine--tRNA ligase of Staphylococcus aureus (strain MSSA476).